Consider the following 274-residue polypeptide: Pyridoxal phosphate homeostasis protein (274 aa).

Residue Ser-6 is modified to Phosphoserine. Lys-47 is subject to N6-(pyridoxal phosphate)lysine. Tyr-69 is modified (phosphotyrosine). An N6-succinyllysine modification is found at Lys-125. 2 positions are modified to phosphoserine: Ser-226 and Ser-244.

The protein belongs to the pyridoxal phosphate-binding protein YggS/PROSC family.

Its function is as follows. Pyridoxal 5'-phosphate (PLP)-binding protein, which may be involved in intracellular homeostatic regulation of pyridoxal 5'-phosphate (PLP), the active form of vitamin B6. This chain is Pyridoxal phosphate homeostasis protein, found in Mus musculus (Mouse).